The chain runs to 441 residues: GTPase Der (441 aa).

2 EngA-type G domains span residues 4–168 (PVVA…PEDI) and 177–352 (IRIA…EQNS). GTP is bound by residues 10-17 (GRPNVGKS), 57-61 (DTGGI), 121-124 (NKVE), 183-190 (GRPNVGKS), 230-234 (DTAGM), and 295-298 (NKWD). A KH-like domain is found at 353-437 (TRVATATLNT…PIRMIVRQKD (85 aa)).

Belongs to the TRAFAC class TrmE-Era-EngA-EngB-Septin-like GTPase superfamily. EngA (Der) GTPase family. Associates with the 50S ribosomal subunit.

Functionally, GTPase that plays an essential role in the late steps of ribosome biogenesis. The polypeptide is GTPase Der (Desulfitobacterium hafniense (strain Y51)).